We begin with the raw amino-acid sequence, 432 residues long: Trigger factor (432 aa).

The PPIase FKBP-type domain maps to 161–246; the sequence is EDRVTIDFTG…LKKVEERELP (86 aa).

It belongs to the FKBP-type PPIase family. Tig subfamily.

The protein resides in the cytoplasm. It carries out the reaction [protein]-peptidylproline (omega=180) = [protein]-peptidylproline (omega=0). Functionally, involved in protein export. Acts as a chaperone by maintaining the newly synthesized protein in an open conformation. Functions as a peptidyl-prolyl cis-trans isomerase. The protein is Trigger factor of Citrobacter koseri (strain ATCC BAA-895 / CDC 4225-83 / SGSC4696).